Reading from the N-terminus, the 331-residue chain is ADP-L-glycero-D-manno-heptose-6-epimerase (331 aa).

Residues 11–12 (FI), 32–33 (DN), Lys39, Lys54, 75–79 (EGACS), and Asn92 each bind NADP(+). Residue Tyr139 is the Proton acceptor of the active site. Position 143 (Lys143) interacts with NADP(+). Asn168 provides a ligand contact to substrate. Val169 and Lys177 together coordinate NADP(+). Residue Lys177 is the Proton acceptor of the active site. Residues Arg179, His186, 200–203 (FGEY), Arg213, and Tyr292 each bind substrate.

Belongs to the NAD(P)-dependent epimerase/dehydratase family. HldD subfamily. As to quaternary structure, homopentamer. Requires NADP(+) as cofactor.

It carries out the reaction ADP-D-glycero-beta-D-manno-heptose = ADP-L-glycero-beta-D-manno-heptose. It functions in the pathway nucleotide-sugar biosynthesis; ADP-L-glycero-beta-D-manno-heptose biosynthesis; ADP-L-glycero-beta-D-manno-heptose from D-glycero-beta-D-manno-heptose 7-phosphate: step 4/4. Its function is as follows. Catalyzes the interconversion between ADP-D-glycero-beta-D-manno-heptose and ADP-L-glycero-beta-D-manno-heptose via an epimerization at carbon 6 of the heptose. This Cupriavidus metallidurans (strain ATCC 43123 / DSM 2839 / NBRC 102507 / CH34) (Ralstonia metallidurans) protein is ADP-L-glycero-D-manno-heptose-6-epimerase.